Consider the following 184-residue polypeptide: Large ribosomal subunit protein uL22B (184 aa).

K46 is covalently cross-linked (Glycyl lysine isopeptide (Lys-Gly) (interchain with G-Cter in ubiquitin)). T70 bears the Phosphothreonine mark.

The protein belongs to the universal ribosomal protein uL22 family. As to quaternary structure, component of the large ribosomal subunit (LSU). Mature yeast ribosomes consist of a small (40S) and a large (60S) subunit. The 40S small subunit contains 1 molecule of ribosomal RNA (18S rRNA) and 33 different proteins (encoded by 57 genes). The large 60S subunit contains 3 rRNA molecules (25S, 5.8S and 5S rRNA) and 46 different proteins (encoded by 81 genes). uL22 is associated with the polypeptide exit tunnel.

The protein localises to the cytoplasm. Its function is as follows. Component of the ribosome, a large ribonucleoprotein complex responsible for the synthesis of proteins in the cell. The small ribosomal subunit (SSU) binds messenger RNAs (mRNAs) and translates the encoded message by selecting cognate aminoacyl-transfer RNA (tRNA) molecules. The large subunit (LSU) contains the ribosomal catalytic site termed the peptidyl transferase center (PTC), which catalyzes the formation of peptide bonds, thereby polymerizing the amino acids delivered by tRNAs into a polypeptide chain. The nascent polypeptides leave the ribosome through a tunnel in the LSU and interact with protein factors that function in enzymatic processing, targeting, and the membrane insertion of nascent chains at the exit of the ribosomal tunnel. The protein is Large ribosomal subunit protein uL22B of Saccharomyces cerevisiae (strain ATCC 204508 / S288c) (Baker's yeast).